A 101-amino-acid chain; its full sequence is Rho GTPase-activating protein 39 (101 aa).

The Rho-GAP domain occupies 1-96 (YEQCIAHYES…VLIQHLDTSF (96 aa)).

In terms of tissue distribution, preoptic area and testis.

This chain is Rho GTPase-activating protein 39 (Arhgap39), found in Rattus norvegicus (Rat).